The following is a 47-amino-acid chain: Large ribosomal subunit protein eL40 (47 aa).

Belongs to the eukaryotic ribosomal protein eL40 family.

The polypeptide is Large ribosomal subunit protein eL40 (Methanococcus aeolicus (strain ATCC BAA-1280 / DSM 17508 / OCM 812 / Nankai-3)).